The primary structure comprises 200 residues: Holliday junction branch migration complex subunit RuvA (200 aa).

Residues 1–63 are domain I; sequence MFEYLTGLIT…EDAITLFGFA (63 aa). The interval 64–142 is domain II; that stretch reads TQAEKRLFTQ…AVQDEVQLDF (79 aa). The tract at residues 143-151 is flexible linker; sequence TAPGPLGPS. A domain III region spans residues 151–200; it reads SAALQDALAALESLGYTTKQVERVQKQLEGLQGELSTNDYLSQGLKLLSR.

This sequence belongs to the RuvA family. Homotetramer. Forms an RuvA(8)-RuvB(12)-Holliday junction (HJ) complex. HJ DNA is sandwiched between 2 RuvA tetramers; dsDNA enters through RuvA and exits via RuvB. An RuvB hexamer assembles on each DNA strand where it exits the tetramer. Each RuvB hexamer is contacted by two RuvA subunits (via domain III) on 2 adjacent RuvB subunits; this complex drives branch migration. In the full resolvosome a probable DNA-RuvA(4)-RuvB(12)-RuvC(2) complex forms which resolves the HJ.

The protein resides in the cytoplasm. Functionally, the RuvA-RuvB-RuvC complex processes Holliday junction (HJ) DNA during genetic recombination and DNA repair, while the RuvA-RuvB complex plays an important role in the rescue of blocked DNA replication forks via replication fork reversal (RFR). RuvA specifically binds to HJ cruciform DNA, conferring on it an open structure. The RuvB hexamer acts as an ATP-dependent pump, pulling dsDNA into and through the RuvAB complex. HJ branch migration allows RuvC to scan DNA until it finds its consensus sequence, where it cleaves and resolves the cruciform DNA. In Limosilactobacillus fermentum (strain NBRC 3956 / LMG 18251) (Lactobacillus fermentum), this protein is Holliday junction branch migration complex subunit RuvA.